The following is a 207-amino-acid chain: Superoxide dismutase [Mn] (207 aa).

Residues H27, H82, D169, and H173 each contribute to the Mn(2+) site.

It belongs to the iron/manganese superoxide dismutase family. Requires Mn(2+) as cofactor.

The catalysed reaction is 2 superoxide + 2 H(+) = H2O2 + O2. Destroys superoxide anion radicals which are normally produced within the cells and which are toxic to biological systems. The chain is Superoxide dismutase [Mn] (sodA) from Yersinia enterocolitica.